Here is a 236-residue protein sequence, read N- to C-terminus: uncharacterized protein (236 aa).

NADP(+) contacts are provided by aspartate 22, asparagine 49, and lysine 82. Active-site proton donor residues include serine 100 and tyrosine 114. NADP(+)-binding residues include tyrosine 114 and lysine 118. The active-site Lowers pKa of active site Tyr is the lysine 118.

It belongs to the short-chain dehydrogenases/reductases (SDR) family.

Its subcellular location is the cytoplasm. The protein localises to the nucleus. This is an uncharacterized protein from Schizosaccharomyces pombe (strain 972 / ATCC 24843) (Fission yeast).